Reading from the N-terminus, the 242-residue chain is UPF0309 protein BH3325 (242 aa).

Residues 34 to 217 (VSEAVMNGGR…HLLVQQGFEP (184 aa)) form the SIS domain.

Belongs to the UPF0309 family.

The sequence is that of UPF0309 protein BH3325 from Halalkalibacterium halodurans (strain ATCC BAA-125 / DSM 18197 / FERM 7344 / JCM 9153 / C-125) (Bacillus halodurans).